Reading from the N-terminus, the 492-residue chain is Cysteine--tRNA ligase (492 aa).

Cysteine 29 serves as a coordination point for Zn(2+). A 'HIGH' region motif is present at residues 31–41 (PTVYDYAHIGN). The Zn(2+) site is built by cysteine 222, histidine 247, and glutamate 251. The 'KMSKS' region motif lies at 279-283 (KMSKS). Lysine 282 is an ATP binding site.

Belongs to the class-I aminoacyl-tRNA synthetase family. In terms of assembly, monomer. Requires Zn(2+) as cofactor.

It localises to the cytoplasm. The enzyme catalyses tRNA(Cys) + L-cysteine + ATP = L-cysteinyl-tRNA(Cys) + AMP + diphosphate. In Treponema denticola (strain ATCC 35405 / DSM 14222 / CIP 103919 / JCM 8153 / KCTC 15104), this protein is Cysteine--tRNA ligase.